Reading from the N-terminus, the 327-residue chain is Zinc finger protein 444 (327 aa).

M1 carries the N-acetylmethionine modification. K8 is covalently cross-linked (Glycyl lysine isopeptide (Lys-Gly) (interchain with G-Cter in SUMO2)). Residues S18 and S104 each carry the phosphoserine modification. The region spanning 20 to 104 is the SCAN box domain; sequence WHRFRRFHLG…LEELWGPAAS (85 aa). Positions 101-171 are disordered; it reads PAASPDGSSA…SPPLAPGLPA (71 aa). Positions 106–118 are enriched in polar residues; that stretch reads DGSSATRVPQDVT. Low complexity predominate over residues 134-148; it reads PLAGTAPGAEGPAPG. C2H2-type zinc fingers lie at residues 179 to 201 and 207 to 229; these read TSCPECGKTSLKPAHLLRHRQSH and HACPECGKAFRRKEHLRRHRDTH. K190 participates in a covalent cross-link: Glycyl lysine isopeptide (Lys-Gly) (interchain with G-Cter in SUMO2). The disordered stretch occupies residues 220–243; it reads EHLRRHRDTHPGSPGSPGPALRPL. Residue S235 is modified to Phosphoserine. 2 C2H2-type zinc fingers span residues 250-272 and 278-300; these read HACCECGKTFYWREHLVRHRKTH and FACWECGKGFGRREHVLRHQRIH. The span at 305-314 shows a compositional bias: low complexity; the sequence is ASAQGAVAPG. Positions 305–327 are disordered; sequence ASAQGAVAPGPDGGGPFPPWPLG.

The protein belongs to the krueppel C2H2-type zinc-finger protein family.

The protein localises to the nucleus. Functionally, transcriptional regulator. Binds to the 5'-flanking critical region of the SCARF1 promoter. The protein is Zinc finger protein 444 (ZNF444) of Homo sapiens (Human).